Reading from the N-terminus, the 131-residue chain is MVKIGARELAAVAIGGALGAVCRYLLSGLVPQVRGFPMGTVLVNVLGSFVLGFLTWSTMLGLRLSPEVRALATVGFCGGLTTLSTMAYETVELLKASPVLSILYLTANVVLGIAAVLGGMAAAHVVWSGRA.

4 consecutive transmembrane segments (helical) span residues 10–30 (AAVA…SGLV), 36–56 (FPMG…FLTW), 71–91 (LATV…YETV), and 99–119 (VLSI…VLGG). Residues G78 and T81 each contribute to the Na(+) site.

It belongs to the fluoride channel Fluc/FEX (TC 1.A.43) family.

The protein resides in the cell membrane. The catalysed reaction is fluoride(in) = fluoride(out). Its activity is regulated as follows. Na(+) is not transported, but it plays an essential structural role and its presence is essential for fluoride channel function. Fluoride-specific ion channel. Important for reducing fluoride concentration in the cell, thus reducing its toxicity. The polypeptide is Fluoride-specific ion channel FluC (Methanopyrus kandleri (strain AV19 / DSM 6324 / JCM 9639 / NBRC 100938)).